A 111-amino-acid polypeptide reads, in one-letter code: ATP-dependent Clp protease adapter protein ClpS (111 aa).

It belongs to the ClpS family. As to quaternary structure, binds to the N-terminal domain of the chaperone ClpA.

In terms of biological role, involved in the modulation of the specificity of the ClpAP-mediated ATP-dependent protein degradation. This is ATP-dependent Clp protease adapter protein ClpS from Legionella pneumophila (strain Paris).